Reading from the N-terminus, the 515-residue chain is Maturase K (515 aa).

Belongs to the intron maturase 2 family. MatK subfamily.

It is found in the plastid. It localises to the chloroplast. In terms of biological role, usually encoded in the trnK tRNA gene intron. Probably assists in splicing its own and other chloroplast group II introns. The protein is Maturase K of Pinus tabuliformis (Chinese red pine).